Here is a 135-residue protein sequence, read N- to C-terminus: Large ribosomal subunit protein uL16c (135 aa).

Belongs to the universal ribosomal protein uL16 family. In terms of assembly, part of the 50S ribosomal subunit.

The protein resides in the plastid. The protein localises to the chloroplast. In Drimys granadensis, this protein is Large ribosomal subunit protein uL16c.